The following is a 302-amino-acid chain: D-alanine--D-alanine ligase B (302 aa).

One can recognise an ATP-grasp domain in the interval 99–294 (KKVLKAENIR…YSKFIDLIIE (196 aa)). 126-181 (IEEIGYPVFVKPNNGGSSVATFKVYKKEDIKNSVMEGLKYDEEVIIESFIKGREIT) provides a ligand contact to ATP. Mg(2+) is bound by residues aspartate 248, glutamate 261, and asparagine 263.

Belongs to the D-alanine--D-alanine ligase family. It depends on Mg(2+) as a cofactor. The cofactor is Mn(2+).

The protein resides in the cytoplasm. The catalysed reaction is 2 D-alanine + ATP = D-alanyl-D-alanine + ADP + phosphate + H(+). Its pathway is cell wall biogenesis; peptidoglycan biosynthesis. Cell wall formation. In Clostridium perfringens (strain 13 / Type A), this protein is D-alanine--D-alanine ligase B.